Reading from the N-terminus, the 575-residue chain is Arginine--tRNA ligase (575 aa).

Positions 136–146 (ANPTGPLHVGH) match the 'HIGH' region motif.

It belongs to the class-I aminoacyl-tRNA synthetase family. In terms of assembly, monomer.

The protein resides in the cytoplasm. The enzyme catalyses tRNA(Arg) + L-arginine + ATP = L-arginyl-tRNA(Arg) + AMP + diphosphate. The chain is Arginine--tRNA ligase from Polynucleobacter necessarius subsp. necessarius (strain STIR1).